The sequence spans 1678 residues: MTQPLPIRFQEHLQLTNVGINANSFSFSTLTMESDKFICVREKVNDTAQVVIIDMNDATNPTRRPISADSAIMNPASKVIALKAQKTLQIFNIEMKSKMKAHTMNEDVVFWKWISLNTLALVTETSVFHWSMEGDSMPQKMFDRHSSLNGCQIINYRCNASQQWLLLVGISALPSRVAGAMQLYSVERKVSQAIEGHAASFATFKIDANKEPTTLFCFAVRTATGGKLHIIEVGAPPNGNQPFAKKAVDVFFPPEAQNDFPVAMQVSAKYDTIYLITKYGYIHLYDMETATCIYMNRISADTIFVTAPHEASGGIIGVNRKGQVLSVTVDEEQIIPYINTVLQNPDLALRMAVRNNLAGAEDLFVRKFNKLFTAGQYAEAAKVAALAPKAILRTPQTIQRFQQVQTPAGSTTPPLLQYFGILLDQGKLNKFESLELCRPVLLQGKKQLCEKWLKEEKLECSEELGDLVKASDLTLALSIYLRANVPNKVIQCFAETGQFQKIVLYAKKVNYTPDYVFLLRSVMRSNPEQGAGFASMLVAEEEPLADINQIVDIFMEHSMVQQCTAFLLDALKHNRPAEGALQTRLLEMNLMSAPQVADAILGNAMFTHYDRAHIAQLCEKAGLLQRALEHYTDLYDIKRAVVHTHMLNAEWLVSFFGTLSVEDSLECLKAMLTANLRQNLQICVQIATKYHEQLTNKALIDLFEGFKSYDGLFYFLSSIVNFSQDPEVHFKYIQAACKTNQIKEVERICRESNCYNPERVKNFLKEAKLTDQLPLIIVCDRFDFVHDLVLYLYRNNLQKYIEIYVQKVNPSRLPVVVGGLLDVDCSEDIIKNLILVVKGQFSTDELVEEVEKRNRLKLLLPWLESRVHEGCVEPATHNALAKIYIDSNNNPERYLKENQYYDSRVVGRYCEKRDPHLACVAYERGLCDRELIAVCNENSLFKSEARYLVGRRDAELWAEVLSESNPYKRQLIDQVVQTALSETQDPDDISVTVKAFMTADLPNELIELLEKIILDSSVFSDHRNLQNLLILTAIKADRTRVMDYINRLENYDAPDIANIAISNQLYEEAFAIFKKFDVNTSAIQVLIDQVNNLERANEFAERCNEPAVWSQLAKAQLQQGLVKEAIDSYIKADDPSAYVDVVDVASKVESWDDLVRYLQMARKKARESYIESELIYAYARTGRLADLEEFISGPNHADIQKIGNRCFSDGMYDAAKLLYNNVSNFARLAITLVYLKEFQGAVDSARKANSTRTWKEVCFACVDAEEFRLAQMCGLHIVVHADELEDLINYYQNRGYFDELIALLESALGLERAHMGMFTELAILYSKFKPSKMREHLELFWSRVNIPKVLRAAESAHLWSELVFLYDKYEEYDNAVLAMMAHPTEAWREGHFKDIITKVANIELYYKAIEFYLDFKPLLLNDMLLVLAPRMDHTRAVSYFSKTGYLPLVKPYLRSVQSLNNKAINEALNGLLIDEEDYQGLRNSIDGFDNFDNIALAQKLEKHELTEFRRIAAYLYKGNNRWKQSVELCKKDKLYKDAMEYAAESCKQDIAEELLGWFLERDAYDCFAACLYQCYDLLRPDVILELAWKHKIVDFAMPYLIQVLREYTTKVDKLELNEAQREKEDDSTEHKNIIQMEPQLMITAGPAMGIPPQYAQNYPPGAATVTAAGGRNMGYPYL.

WD40-like repeat stretches follow at residues 24 to 67, 68 to 107, 108 to 149, 150 to 195, 196 to 257, 258 to 301, and 302 to 330; these read SFSF…RPIS, ADSA…MNED, VVFW…SSLN, GCQI…QAIE, GHAA…PEAQ, NDFP…ISAD, and TIFV…VTVD. CHCR repeat units follow at residues 538–684, 687–829, 834–973, 980–1125, 1129–1270, 1275–1421, and 1424–1567; these read VAEE…QICV, ATKY…SEDI, ILVV…QLID, LSET…VKEA, YIKA…FRLA, LHIV…LLLN, and LLVL…YDCF. Residues 1334-1643 form an involved in binding clathrin light chain region; sequence REHLELFWSR…IQMEPQLMIT (310 aa). Residues 1552-1677 are trimerization; that stretch reads EELLGWFLER…AGGRNMGYPY (126 aa).

The protein belongs to the clathrin heavy chain family. In terms of assembly, clathrin triskelions, composed of 3 heavy chains and 3 light chains, are the basic subunits of the clathrin coat. Interacts with sau.

It is found in the cytoplasmic vesicle membrane. Its subcellular location is the membrane. The protein resides in the coated pit. Its function is as follows. Clathrin is the major protein of the polyhedral coat of coated pits and vesicles. The protein is Clathrin heavy chain (Chc) of Drosophila melanogaster (Fruit fly).